We begin with the raw amino-acid sequence, 354 residues long: Cellular communication network factor 6 (354 aa).

An N-terminal signal peptide occupies residues 1–23 (MQGLLFSTLLLAGLAQFCCRVQG). The region spanning 44 to 117 (RKQFCHWPCK…RYETGVCAYL (74 aa)) is the IGFBP N-terminal domain. Intrachain disulfides connect C48–C72, C52–C74, C54–C75, C61–C78, C86–C100, and C92–C114. N-linked (GlcNAc...) asparagine glycosylation is present at N178. In terms of domain architecture, TSP type-1 spans 208–253 (KCLVQATKWTPCSRTCGMGISNRVTNENSNCEMRKEKRLCYIQPCD). 5 disulfides stabilise this stretch: C268–C305, C285–C319, C296–C335, C299–C337, and C304–C341. The CTCK domain maps to 268 to 342 (CQPTFQLSKA…TSCVCQRNCR (75 aa)). N308 is a glycosylation site (N-linked (GlcNAc...) asparagine).

It belongs to the CCN family. As to expression, predominant expression in adult kidney and testis and fetal kidney. Weaker expression found in placenta, ovary, prostate and small intestine. Also expressed in skeletally-derived cells such as synoviocytes and articular cartilage chondrocytes.

The protein resides in the secreted. It is found in the mitochondrion. Functionally, plays a role in mitochondrial electron transport and mitochondrial respiration. Through its regulation of the mitochondrial function may play a role in normal postnatal skeletal growth and cartilage homeostasis. This chain is Cellular communication network factor 6, found in Homo sapiens (Human).